The primary structure comprises 271 residues: Phosphatidylglycerol--prolipoprotein diacylglyceryl transferase (271 aa).

Helical transmembrane passes span 21–41 (ISVR…MWLA), 60–80 (LLFA…VLFY), 95–115 (VWTG…AMLW), 124–144 (FFGV…VGRL), 176–196 (SQLY…NWFI), 203–223 (GSVS…VEYV), and 230–250 (LGLF…MIIG). Arg143 is a binding site for a 1,2-diacyl-sn-glycero-3-phospho-(1'-sn-glycerol).

The protein belongs to the Lgt family.

It localises to the cell inner membrane. The enzyme catalyses L-cysteinyl-[prolipoprotein] + a 1,2-diacyl-sn-glycero-3-phospho-(1'-sn-glycerol) = an S-1,2-diacyl-sn-glyceryl-L-cysteinyl-[prolipoprotein] + sn-glycerol 1-phosphate + H(+). The protein operates within protein modification; lipoprotein biosynthesis (diacylglyceryl transfer). Catalyzes the transfer of the diacylglyceryl group from phosphatidylglycerol to the sulfhydryl group of the N-terminal cysteine of a prolipoprotein, the first step in the formation of mature lipoproteins. The protein is Phosphatidylglycerol--prolipoprotein diacylglyceryl transferase of Vibrio vulnificus (strain CMCP6).